We begin with the raw amino-acid sequence, 131 residues long: Small ribosomal subunit protein bS6 (131 aa).

Positions 94–131 (DAVTEESQLAKNADEKRARKATTRRPDSNDDNDNHSDD) are disordered. Positions 117-131 (RRPDSNDDNDNHSDD) are enriched in basic and acidic residues.

This sequence belongs to the bacterial ribosomal protein bS6 family.

Functionally, binds together with bS18 to 16S ribosomal RNA. This Psychrobacter cryohalolentis (strain ATCC BAA-1226 / DSM 17306 / VKM B-2378 / K5) protein is Small ribosomal subunit protein bS6.